Consider the following 467-residue polypeptide: MELYAAGRYDSEPFKMNEHDIIQLYGEDVQYVKNAFLSSDSTCNNNVYSLEEHELDDDKKNLSGVLVEYKIKISLLQSSDGVKHLFFCTNPKSVDIARMLEIPEGKDKTRVYFMMPLLVLCLGLSATFSGLNLAIMSFSINDLKLIQESDSDKLMKQRAMDVMRLRRNSNFVLVTIIFGNCFCNISITLLMNYFAEFYGFGGFIFVELISTALLLIFTEILPSLIFTKNALAIASRLQYFVIFTMCITSPISYPLAMLLNIILGKENADDSAPLDLDALQIDELEDEEAADGNNFHEMMSVVKKTIKLREKLASDVMTEIDKVGMYSEHQQVTHSFLLDAYEQGHSRLPVYEGETRNKIRGVLNITDMMLLMDDEGRGSDTDLTLGTMLSVLEKRRKHCFVLDTMPVEHFMSELQQGCPMAIVVRYKEVDSEEDGTEIYEVCGIVTLEDCIEEILGEIFDEKDARQE.

Residues 1–110 (MELYAAGRYD…EIPEGKDKTR (110 aa)) lie on the Extracellular side of the membrane. Asn61 is a glycosylation site (N-linked (GlcNAc...) asparagine). Residues 107-293 (DKTRVYFMMP…LEDEEAADGN (187 aa)) enclose the CNNM transmembrane domain. The helical transmembrane segment at 111–131 (VYFMMPLLVLCLGLSATFSGL) threads the bilayer. The Cytoplasmic portion of the chain corresponds to 132 to 170 (NLAIMSFSINDLKLIQESDSDKLMKQRAMDVMRLRRNSN). A helical membrane pass occupies residues 171–191 (FVLVTIIFGNCFCNISITLLM). Topologically, residues 192–196 (NYFAE) are extracellular. Residues 197–217 (FYGFGGFIFVELISTALLLIF) traverse the membrane as a helical segment. The Cytoplasmic portion of the chain corresponds to 218–238 (TEILPSLIFTKNALAIASRLQ). The chain crosses the membrane as a helical span at residues 239–259 (YFVIFTMCITSPISYPLAMLL). Residues 260-467 (NIILGKENAD…IFDEKDARQE (208 aa)) are Extracellular-facing. CBS domains lie at 317–381 (MTEI…GSDT) and 394–461 (KRRK…IFDE). N-linked (GlcNAc...) asparagine glycosylation is present at Asn364.

This sequence belongs to the ACDP family.

It is found in the cell membrane. Functionally, probable metal transporter. Probably acts redundantly with the other metal transport proteins cnnm-1, cnnm-2, cnnm-3 and cnnm-5 to regulate Mg(2+) homeostasis. The sequence is that of Metal transporter cnnm-4 from Caenorhabditis elegans.